The primary structure comprises 162 residues: NADH-quinone oxidoreductase subunit I (162 aa).

4Fe-4S ferredoxin-type domains follow at residues 52-82 (LRRYPNGEERCIACKLCEAICPAQAITIEAG) and 93-122 (VRYDIDMVKCIYCGLCQEACPVDAIVEGPN). 8 residues coordinate [4Fe-4S] cluster: Cys62, Cys65, Cys68, Cys72, Cys102, Cys105, Cys108, and Cys112.

Belongs to the complex I 23 kDa subunit family. NDH-1 is composed of 14 different subunits. Subunits NuoA, H, J, K, L, M, N constitute the membrane sector of the complex. Requires [4Fe-4S] cluster as cofactor.

The protein resides in the cell inner membrane. It catalyses the reaction a quinone + NADH + 5 H(+)(in) = a quinol + NAD(+) + 4 H(+)(out). Functionally, NDH-1 shuttles electrons from NADH, via FMN and iron-sulfur (Fe-S) centers, to quinones in the respiratory chain. The immediate electron acceptor for the enzyme in this species is believed to be ubiquinone. Couples the redox reaction to proton translocation (for every two electrons transferred, four hydrogen ions are translocated across the cytoplasmic membrane), and thus conserves the redox energy in a proton gradient. In Nitrobacter hamburgensis (strain DSM 10229 / NCIMB 13809 / X14), this protein is NADH-quinone oxidoreductase subunit I.